The chain runs to 152 residues: Large ribosomal subunit protein bL9 (152 aa).

This sequence belongs to the bacterial ribosomal protein bL9 family.

In terms of biological role, binds to the 23S rRNA. In Synechococcus sp. (strain CC9902), this protein is Large ribosomal subunit protein bL9.